Reading from the N-terminus, the 88-residue chain is Small ribosomal subunit protein bS20 (88 aa).

Positions 1-36 (MANTSSAKKATRKIARRTAVNKSRRTQMRGSVRTVE) are disordered.

This sequence belongs to the bacterial ribosomal protein bS20 family.

Functionally, binds directly to 16S ribosomal RNA. This is Small ribosomal subunit protein bS20 from Rhodopseudomonas palustris (strain HaA2).